The sequence spans 327 residues: GTPase Obg (327 aa).

An Obg domain is found at 2–160 (HTFKDSLNIT…LDLRLELVLI (159 aa)). The region spanning 161 to 326 (ADIGLVGLPN…LVNELFALSR (166 aa)) is the OBG-type G domain. Residues 167–174 (GLPNAGKS), 192–196 (FTTKV), 213–216 (DVPG), 280–283 (NKLD), and 307–309 (SIY) each bind GTP. Residues Ser174 and Thr194 each contribute to the Mg(2+) site.

This sequence belongs to the TRAFAC class OBG-HflX-like GTPase superfamily. OBG GTPase family. Monomer. It depends on Mg(2+) as a cofactor.

It is found in the cytoplasm. An essential GTPase which binds GTP, GDP and possibly (p)ppGpp with moderate affinity, with high nucleotide exchange rates and a fairly low GTP hydrolysis rate. Plays a role in control of the cell cycle, stress response, ribosome biogenesis and in those bacteria that undergo differentiation, in morphogenesis control. The chain is GTPase Obg from Borrelia turicatae (strain 91E135).